A 596-amino-acid chain; its full sequence is Inactive metallocarboxypeptidase ECM14 (596 aa).

The N-terminal stretch at 1 to 22 is a signal peptide; the sequence is MHFSVRLSLFLTLASSLPLVSA. Residues 23 to 184 constitute a propeptide that is removed on maturation; sequence VPQHEDQAYT…QTIYESYPKA (162 aa). A disordered region spans residues 181 to 210; it reads YPKAGSAPPSQQGPTTRRFSPSASTSKSKP. The span at 188 to 207 shows a compositional bias: polar residues; that stretch reads PPSQQGPTTRRFSPSASTSK. The 327-residue stretch at 220–546 folds into the Peptidase M14 domain; the sequence is DYQPLSVLLP…RAMVAMGKFL (327 aa). Positions 285 and 288 each coordinate Zn(2+). Substrate-binding positions include 285 to 288, Arg343, and 360 to 361; these read HARE and DH. A disulfide bridge connects residues Cys354 and Cys377. A glycan (N-linked (GlcNAc...) asparagine) is linked at Asn370. His417 provides a ligand contact to Zn(2+). 418–419 is a binding site for substrate; sequence SY. A disordered region spans residues 557 to 596; that stretch reads DGLRASEEPQDYDNDLEDGEDDKDEQDSTVFRAQADDLQS. Residues 564 to 583 show a composition bias toward acidic residues; that stretch reads EPQDYDNDLEDGEDDKDEQD.

This sequence belongs to the peptidase M14 family. The cofactor is Zn(2+).

The protein resides in the vacuole. It localises to the secreted. Inactive carboxypeptidase that may play a role in cell wall organization and biogenesis. In Trichophyton verrucosum (strain HKI 0517), this protein is Inactive metallocarboxypeptidase ECM14 (ECM14).